Reading from the N-terminus, the 871-residue chain is DNA mismatch repair protein MutS (871 aa).

616–623 serves as a coordination point for ATP; the sequence is GPNMAGKS. Residues 801 to 825 form a disordered region; the sequence is ETEKTEESMEGTNLPKKKKEEKTSS.

The protein belongs to the DNA mismatch repair MutS family.

Its function is as follows. This protein is involved in the repair of mismatches in DNA. It is possible that it carries out the mismatch recognition step. This protein has a weak ATPase activity. The chain is DNA mismatch repair protein MutS from Clostridium kluyveri (strain NBRC 12016).